Consider the following 149-residue polypeptide: Large ribosomal subunit protein bL9 (149 aa).

The protein belongs to the bacterial ribosomal protein bL9 family.

Binds to the 23S rRNA. This Alkaliphilus metalliredigens (strain QYMF) protein is Large ribosomal subunit protein bL9.